A 694-amino-acid chain; its full sequence is Transcription activator of gluconeogenesis Pc22g08580 (694 aa).

The disordered stretch occupies residues methionine 1–alanine 61. Over residues serine 17–arginine 55 the composition is skewed to basic and acidic residues. The segment at residues cysteine 65–cysteine 93 is a DNA-binding region (zn(2)-C6 fungal-type). Disordered stretches follow at residues threonine 126–phenylalanine 240, alanine 276–serine 300, and threonine 552–arginine 582. A compositionally biased stretch (polar residues) spans proline 132 to valine 141. Low complexity predominate over residues asparagine 142 to threonine 171. 3 stretches are compositionally biased toward polar residues: residues glycine 172–proline 234, proline 281–serine 300, and threonine 552–glycine 581.

Belongs to the ERT1/acuK family.

The protein localises to the nucleus. Its function is as follows. Transcription factor which regulates nonfermentable carbon utilization. Activator of gluconeogenetic genes. The sequence is that of Transcription activator of gluconeogenesis Pc22g08580 from Penicillium rubens (strain ATCC 28089 / DSM 1075 / NRRL 1951 / Wisconsin 54-1255) (Penicillium chrysogenum).